A 410-amino-acid polypeptide reads, in one-letter code: Serine hydroxymethyltransferase (410 aa).

Residues Leu-116 and 120–122 (GHL) each bind (6S)-5,6,7,8-tetrahydrofolate. Lys-225 carries the N6-(pyridoxal phosphate)lysine modification. 349 to 351 (SPF) provides a ligand contact to (6S)-5,6,7,8-tetrahydrofolate.

The protein belongs to the SHMT family. In terms of assembly, homodimer. The cofactor is pyridoxal 5'-phosphate.

The protein resides in the cytoplasm. The catalysed reaction is (6R)-5,10-methylene-5,6,7,8-tetrahydrofolate + glycine + H2O = (6S)-5,6,7,8-tetrahydrofolate + L-serine. It functions in the pathway one-carbon metabolism; tetrahydrofolate interconversion. The protein operates within amino-acid biosynthesis; glycine biosynthesis; glycine from L-serine: step 1/1. Functionally, catalyzes the reversible interconversion of serine and glycine with tetrahydrofolate (THF) serving as the one-carbon carrier. This reaction serves as the major source of one-carbon groups required for the biosynthesis of purines, thymidylate, methionine, and other important biomolecules. Also exhibits THF-independent aldolase activity toward beta-hydroxyamino acids, producing glycine and aldehydes, via a retro-aldol mechanism. In Leuconostoc mesenteroides subsp. mesenteroides (strain ATCC 8293 / DSM 20343 / BCRC 11652 / CCM 1803 / JCM 6124 / NCDO 523 / NBRC 100496 / NCIMB 8023 / NCTC 12954 / NRRL B-1118 / 37Y), this protein is Serine hydroxymethyltransferase.